A 71-amino-acid chain; its full sequence is UPF0434 protein APH_0052 (71 aa).

Basic and acidic residues predominate over residues 52-63 (RKLQPEEPKEGS). The segment at 52 to 71 (RKLQPEEPKEGSELQSSDNQ) is disordered.

The protein belongs to the UPF0434 family.

In Anaplasma phagocytophilum (strain HZ), this protein is UPF0434 protein APH_0052.